Reading from the N-terminus, the 204-residue chain is Urease accessory protein UreE (204 aa).

Over residues 172-190 (HGHAHSHDHDHDHDHDHQH) the composition is skewed to basic and acidic residues. The segment at 172-204 (HGHAHSHDHDHDHDHDHQHGPGCTHGHHGHDHH) is disordered.

It belongs to the UreE family.

It localises to the cytoplasm. Functionally, involved in urease metallocenter assembly. Binds nickel. Probably functions as a nickel donor during metallocenter assembly. In Burkholderia orbicola (strain AU 1054), this protein is Urease accessory protein UreE.